A 1020-amino-acid polypeptide reads, in one-letter code: Sodium/potassium-transporting ATPase subunit alpha-2 (1020 aa).

A propeptide spanning residues 1–5 is cleaved from the precursor; it reads MGRGA. The interval 1 to 31 is disordered; it reads MGRGAGREYSPAATTAENGGGKKKQKEKELD. The Cytoplasmic segment spans residues 6–85; sequence GREYSPAATT…NALTPPPTTP (80 aa). Ser10 bears the Phosphoserine mark. The interaction with phosphoinositide-3 kinase stretch occupies residues 80-82; it reads PPP. A helical membrane pass occupies residues 86–106; sequence EWVKFCRQLFGGFSILLWIGA. Residues 107–129 lie on the Extracellular side of the membrane; that stretch reads ILCFLAFGIQAAMEDEPSNDNLY. The helical transmembrane segment at 130 to 150 threads the bilayer; it reads LGVVLAAVVIVTGCFSYYQEA. Topologically, residues 151–286 are cytoplasmic; that stretch reads KSSKIMDSFK…VGRTPIAMEI (136 aa). The segment covering 212–227 has biased composition (polar residues); sequence DNSSLTGESEPQTRSP. The interval 212–231 is disordered; it reads DNSSLTGESEPQTRSPEFTH. Residues 287–306 traverse the membrane as a helical segment; the sequence is EHFIQLITGVAVFLGVSFFV. Residues 307–318 lie on the Extracellular side of the membrane; sequence LSLILGYSWLEA. Residues 319 to 336 form a helical membrane-spanning segment; that stretch reads VIFLIGIIVANVPEGLLA. At 337 to 769 the chain is on the cytoplasmic side; sequence TVTVCLTLTA…EEGRLIFDNL (433 aa). Asp374 serves as the catalytic 4-aspartylphosphate intermediate. 4 positions are modified to phosphoserine: Ser439, Ser450, Ser496, and Ser559. At Thr570 the chain carries Phosphothreonine. 2 positions are modified to phosphoserine: Ser587 and Ser672. Mg(2+)-binding residues include Asp714 and Asp718. The helical transmembrane segment at 770 to 789 threads the bilayer; it reads KKSIAYTLTSNIPEITPFLL. Topologically, residues 790-799 are extracellular; that stretch reads FIIANIPLPL. A helical membrane pass occupies residues 800–820; sequence GTVTILCIDLGTDMVPAISLA. Over 821 to 840 the chain is Cytoplasmic; sequence YEAAESDIMKRQPRNPQTDK. Phosphoserine is present on Ser826. Residues 841-863 form a helical membrane-spanning segment; that stretch reads LVNERLISMAYGQIGMIQALGGF. Residues 864–915 lie on the Extracellular side of the membrane; that stretch reads FTYFVILAENGFLPSRLLGIRLDWDDRSMNDLEDSYGQEWTYEQRKVVEFTC. The helical transmembrane segment at 916–935 threads the bilayer; the sequence is HTAFFASIVVVQWADLIICK. The Cytoplasmic segment spans residues 936 to 948; the sequence is TRRNSVFQQGMKN. At Ser940 the chain carries Phosphoserine; by PKA. A helical membrane pass occupies residues 949 to 967; that stretch reads KILIFGLLEETALAAFLSY. Topologically, residues 968–982 are extracellular; sequence CPGMGVALRMYPLKV. A helical membrane pass occupies residues 983-1003; it reads TWWFCAFPYSLLIFIYDEVRK. Over 1004–1020 the chain is Cytoplasmic; it reads LILRRYPGGWVEKETYY.

This sequence belongs to the cation transport ATPase (P-type) (TC 3.A.3) family. Type IIC subfamily. The sodium/potassium-transporting ATPase is composed of a catalytic alpha subunit, an auxiliary non-catalytic beta subunit and an additional regulatory subunit. Interacts with regulatory subunit FXYD1.

Its subcellular location is the membrane. The protein localises to the cell membrane. It catalyses the reaction K(+)(out) + Na(+)(in) + ATP + H2O = K(+)(in) + Na(+)(out) + ADP + phosphate + H(+). Functionally, this is the catalytic component of the active enzyme, which catalyzes the hydrolysis of ATP coupled with the exchange of sodium and potassium ions across the plasma membrane. This action creates the electrochemical gradient of sodium and potassium, providing the energy for active transport of various nutrients. In Bos taurus (Bovine), this protein is Sodium/potassium-transporting ATPase subunit alpha-2 (ATP1A2).